The sequence spans 249 residues: MSQPAVKASATAAVNPGPDGKGKGAPPPGPAPGSGPAQAPAQPMPAAKGDLPPGSYKLVVFEQENFQGRRVEFSGECLNLGDRGFDRVRSIIVTSGPWVAFEQSNFRGEMFILEKGEYPRWDTWSSSYRSDRLMSFRPIRMDAQEHKLCLFEGANFKGNTMEIQEDDVPSLWVYGFCDRVGSVRVSSGTWVGYQYPGYRGYQYLLEPGDFRHWNDWGAFQPQMQAVRRLRDRQWHREGCFPVLAAEPPK.

The segment at 1–49 (MSQPAVKASATAAVNPGPDGKGKGAPPPGPAPGSGPAQAPAQPMPAAKG) is disordered. Residue S2 is modified to N-acetylserine. The interval 2–55 (SQPAVKASATAAVNPGPDGKGKGAPPPGPAPGSGPAQAPAQPMPAAKGDLPPGS) is N-terminal arm. Residues 34–49 (SGPAQAPAQPMPAAKG) are compositionally biased toward low complexity. Beta/gamma crystallin 'Greek key' domains follow at residues 56 to 95 (YKLV…IVTS) and 96 to 140 (GPWV…RPIR). Residues 141-145 (MDAQE) form a connecting peptide region. 2 Beta/gamma crystallin 'Greek key' domains span residues 146–187 (HKLC…RVSS) and 188–230 (GTWV…RRLR). The tract at residues 232–249 (RQWHREGCFPVLAAEPPK) is C-terminal arm.

Belongs to the beta/gamma-crystallin family. As to quaternary structure, homo/heterodimer, or complexes of higher-order. The structure of beta-crystallin oligomers seems to be stabilized through interactions between the N-terminal arms. Post-translationally, specific cleavages in the N-terminal arm occur during lens maturation and give rise to truncated forms, leading to impaired oligomerization and protein insolubilization.

Crystallins are the dominant structural components of the vertebrate eye lens. The protein is Beta-crystallin B1 (CRYBB1) of Sus scrofa (Pig).